We begin with the raw amino-acid sequence, 187 residues long: MATTNDLKNGMTLDIDGVLWNVVGFQHVKPGKGGAFVRTTLKNVLTGKVVDRTFNAGIKVDVATVDRREMTYLYRDGADFVFMDSESYDQIPVPPGVVGGVADYMLENTIATVALHDDAPLYVELPASVELTISATDPGVQGDRSTGGTKPATLETGANIQVPLFITTGEKVKVDTRDGRYLGRVTS.

Belongs to the elongation factor P family.

The protein localises to the cytoplasm. Its pathway is protein biosynthesis; polypeptide chain elongation. Involved in peptide bond synthesis. Stimulates efficient translation and peptide-bond synthesis on native or reconstituted 70S ribosomes in vitro. Probably functions indirectly by altering the affinity of the ribosome for aminoacyl-tRNA, thus increasing their reactivity as acceptors for peptidyl transferase. This is Elongation factor P from Parafrankia sp. (strain EAN1pec).